The sequence spans 4306 residues: Cytoplasmic dynein 2 heavy chain 1 (4306 aa).

A stem region spans residues 1–1650 (MAGSLGDVRK…YVQMVDSELQ (1650 aa)). 145 to 152 (LGIVLRKS) contacts ATP. Residues 669–696 (KELEGYIQKLQNAAERLATENRRLRKWH) are a coiled coil. 4 AAA regions span residues 1651–1875 (YTYE…VLRG), 1941–2161 (SALK…KQND), 2249–2505 (LTAD…WVLG), and 2617–2862 (HYGR…ESCK). ATP-binding positions include 1689-1696 (GPAGTGKT), 1979-1986 (GPSGAGKS), 2291-2298 (GPEGCGKG), and 2655-2662 (GRSGVGRR). The interval 2880 to 3168 (AISSSKKKEL…AEVSKAQETI (289 aa)) is stalk. 3 coiled-coil regions span residues 2896–2981 (LQAG…KEVQ), 3108–3199 (LETE…LATL), and 3407–3441 (IQHEKPDLEEQKTKLLQQEEDKKIQLARLEESLLE). 2 AAA regions span residues 3243–3472 (LCTE…LIQD) and 3689–3904 (MALF…VIDR).

The protein belongs to the dynein heavy chain family. The cytoplasmic dynein complex 2 is probably composed by a heavy chain DYNC2H1 homodimer and a number of DYNC2LI1 light intermediate chains. Detected in brain, lung, spleen and kidney (at protein level). Enriched in the ependymal layer lining the lateral ventricles (at protein level).

It localises to the cytoplasm. Its subcellular location is the cytoskeleton. The protein resides in the cilium axoneme. It is found in the cell membrane. Functionally, may function as a motor for intraflagellar retrograde transport. Functions in cilia biogenesis. According to PubMed:8666668, it may play a role in transport between endoplasmic reticulum and Golgi or organization of the Golgi in cells. This is Cytoplasmic dynein 2 heavy chain 1 (Dync2h1) from Mus musculus (Mouse).